Reading from the N-terminus, the 209-residue chain is Imidazole glycerol phosphate synthase subunit HisH (209 aa).

The 207-residue stretch at 3–209 folds into the Glutamine amidotransferase type-1 domain; the sequence is KIGLIDYGMG…WINWLKKNKF (207 aa). Cys-81 serves as the catalytic Nucleophile. Active-site residues include His-185 and Glu-187.

In terms of assembly, heterodimer of HisH and HisF.

Its subcellular location is the cytoplasm. It carries out the reaction 5-[(5-phospho-1-deoxy-D-ribulos-1-ylimino)methylamino]-1-(5-phospho-beta-D-ribosyl)imidazole-4-carboxamide + L-glutamine = D-erythro-1-(imidazol-4-yl)glycerol 3-phosphate + 5-amino-1-(5-phospho-beta-D-ribosyl)imidazole-4-carboxamide + L-glutamate + H(+). The enzyme catalyses L-glutamine + H2O = L-glutamate + NH4(+). It participates in amino-acid biosynthesis; L-histidine biosynthesis; L-histidine from 5-phospho-alpha-D-ribose 1-diphosphate: step 5/9. Its function is as follows. IGPS catalyzes the conversion of PRFAR and glutamine to IGP, AICAR and glutamate. The HisH subunit catalyzes the hydrolysis of glutamine to glutamate and ammonia as part of the synthesis of IGP and AICAR. The resulting ammonia molecule is channeled to the active site of HisF. The chain is Imidazole glycerol phosphate synthase subunit HisH from Prochlorococcus marinus (strain NATL2A).